Reading from the N-terminus, the 175-residue chain is Large ribosomal subunit protein uL10 (175 aa).

Belongs to the universal ribosomal protein uL10 family. As to quaternary structure, part of the ribosomal stalk of the 50S ribosomal subunit. The N-terminus interacts with L11 and the large rRNA to form the base of the stalk. The C-terminus forms an elongated spine to which L12 dimers bind in a sequential fashion forming a multimeric L10(L12)X complex.

In terms of biological role, forms part of the ribosomal stalk, playing a central role in the interaction of the ribosome with GTP-bound translation factors. The polypeptide is Large ribosomal subunit protein uL10 (Prochlorococcus marinus (strain NATL1A)).